The following is a 305-amino-acid chain: tRNA-cytidine(32) 2-sulfurtransferase (305 aa).

Residues 1–20 (MTAVLPLPQPLADPAPRDPR) form a disordered region. A PP-loop motif motif is present at residues 59–64 (SGGKDS). [4Fe-4S] cluster contacts are provided by Cys134, Cys137, and Cys225. A compositionally biased stretch (low complexity) spans 282-293 (DAPSDVDPDPSA). Residues 282–305 (DAPSDVDPDPSAWLSASHAPHDSD) are disordered.

It belongs to the TtcA family. Homodimer. The cofactor is Mg(2+). Requires [4Fe-4S] cluster as cofactor.

The protein resides in the cytoplasm. It carries out the reaction cytidine(32) in tRNA + S-sulfanyl-L-cysteinyl-[cysteine desulfurase] + AH2 + ATP = 2-thiocytidine(32) in tRNA + L-cysteinyl-[cysteine desulfurase] + A + AMP + diphosphate + H(+). It participates in tRNA modification. Functionally, catalyzes the ATP-dependent 2-thiolation of cytidine in position 32 of tRNA, to form 2-thiocytidine (s(2)C32). The sulfur atoms are provided by the cysteine/cysteine desulfurase (IscS) system. The polypeptide is tRNA-cytidine(32) 2-sulfurtransferase (Xanthomonas euvesicatoria pv. vesicatoria (strain 85-10) (Xanthomonas campestris pv. vesicatoria)).